A 255-amino-acid chain; its full sequence is Type III pantothenate kinase (255 aa).

6–13 (DVGNTNIV) is an ATP binding site. Residues Tyr100 and 107–110 (GADR) contribute to the substrate site. The active-site Proton acceptor is Asp109. Residue Asp129 participates in K(+) binding. Thr132 is a binding site for ATP. A substrate-binding site is contributed by Thr184.

It belongs to the type III pantothenate kinase family. In terms of assembly, homodimer. NH4(+) serves as cofactor. K(+) is required as a cofactor.

It localises to the cytoplasm. It carries out the reaction (R)-pantothenate + ATP = (R)-4'-phosphopantothenate + ADP + H(+). Its pathway is cofactor biosynthesis; coenzyme A biosynthesis; CoA from (R)-pantothenate: step 1/5. Functionally, catalyzes the phosphorylation of pantothenate (Pan), the first step in CoA biosynthesis. The chain is Type III pantothenate kinase from Geobacter sulfurreducens (strain ATCC 51573 / DSM 12127 / PCA).